Reading from the N-terminus, the 462-residue chain is Argininosuccinate lyase 2 (462 aa).

The protein belongs to the lyase 1 family. Argininosuccinate lyase subfamily.

It localises to the cytoplasm. It carries out the reaction 2-(N(omega)-L-arginino)succinate = fumarate + L-arginine. It participates in amino-acid biosynthesis; L-arginine biosynthesis; L-arginine from L-ornithine and carbamoyl phosphate: step 3/3. This Shouchella clausii (strain KSM-K16) (Alkalihalobacillus clausii) protein is Argininosuccinate lyase 2.